A 416-amino-acid chain; its full sequence is Tumor necrosis factor receptor superfamily member 16 (416 aa).

The N-terminal stretch at 1 to 19 (MAGFVPLLLLLLPAGPTWG) is a signal peptide. TNFR-Cys repeat units follow at residues 23 to 57 (KCLT…TVCE), 58 to 99 (PCLD…DAVC), 100 to 138 (RCAY…DTVC), and 140 to 180 (ECPE…DAEC). 12 disulfide bridges follow: cysteine 24-cysteine 35, cysteine 36-cysteine 49, cysteine 39-cysteine 56, cysteine 59-cysteine 75, cysteine 78-cysteine 91, cysteine 81-cysteine 99, cysteine 101-cysteine 114, cysteine 117-cysteine 130, cysteine 120-cysteine 138, cysteine 141-cysteine 156, cysteine 159-cysteine 172, and cysteine 162-cysteine 180. Residues 29–239 (YTTSGECCKA…PVVSRGTADN (211 aa)) lie on the Extracellular side of the membrane. N-linked (GlcNAc...) asparagine glycosylation is present at asparagine 52. The helical transmembrane segment at 240–261 (LIPVYCSILAAVVVGLVAYIAF) threads the bilayer. Residues 262–416 (KRWNSCKQNK…YSESTATSPV (155 aa)) lie on the Cytoplasmic side of the membrane. Composition is skewed to polar residues over residues 270-284 (NKQG…QTPS) and 294-315 (SGIS…STQG). The disordered stretch occupies residues 270 to 328 (NKQGANNRPVNQTPSPEGEKLHSDSGISVDSQSLHDQQPPNQSTQGPAPKGDGSLYASL). In terms of domain architecture, Death spans 333 to 410 (QEEVEKLLSS…DIAESLYSES (78 aa)).

As to quaternary structure, homodimer; disulfide-linked. Heterodimer with SORCS2. The extracellular domains of the heterodimer bind NGF. Post-translationally, N- and O-glycosylated. Phosphorylated on serine residues. Detected in embryonic dorsal root ganglion and retina.

It localises to the cell membrane. It is found in the perikaryon. The protein resides in the cell projection. The protein localises to the growth cone. Its subcellular location is the dendritic spine. Low affinity receptor which can bind to NGF, BDNF, NTF3, and NTF4. Forms a heterodimeric receptor with SORCS2 that binds the precursor forms of NGF, BDNF and NTF3 with high affinity, and has much lower affinity for mature NGF and BDNF. Plays an important role in differentiation and survival of specific neuronal populations during development. Can mediate cell survival as well as cell death of neural cells. Plays a role in the inactivation of RHOA. Necessary for the circadian oscillation of clock genes in the suprachiasmatic nucleus (SCmgetaN) of the brain and in liver and of the genes involved in glucose and lipid metabolism in the liver. This chain is Tumor necrosis factor receptor superfamily member 16 (NGFR), found in Gallus gallus (Chicken).